Reading from the N-terminus, the 137-residue chain is Small ribosomal subunit protein uS11 (137 aa).

Residues 1–10 show a composition bias toward polar residues; it reads MPPKSRSTGP. 2 disordered regions span residues 1–27 and 116–137; these read MPPK…IPHG and GTIS…RRRV. Basic residues predominate over residues 12–21; it reads KTQKTRRRDK.

This sequence belongs to the universal ribosomal protein uS11 family. In terms of assembly, part of the 30S ribosomal subunit. Interacts with proteins S7 and S18. Binds to IF-3.

In terms of biological role, located on the platform of the 30S subunit, it bridges several disparate RNA helices of the 16S rRNA. Forms part of the Shine-Dalgarno cleft in the 70S ribosome. The sequence is that of Small ribosomal subunit protein uS11 from Rhodococcus erythropolis (strain PR4 / NBRC 100887).